The primary structure comprises 80 residues: FXYD domain-containing ion transport regulator 7 (80 aa).

At 1–22 (MATPTQSPTNVPEETDPFFYDY) the chain is on the extracellular side. 3 O-linked (GlcNAc) threonine glycosylation sites follow: Thr-3, Thr-5, and Thr-9. Residues 23–45 (ATVQTVGMTLATIMFVLGIIIII) form a helical membrane-spanning segment. Residues 46–80 (SKKVKCRKADSRSESPTCKSCKSELPSSAPGGGGV) are Cytoplasmic-facing. Residues 56 to 80 (SRSESPTCKSCKSELPSSAPGGGGV) are disordered. Phosphoserine is present on Ser-73.

It belongs to the FXYD family. In terms of assembly, regulatory subunit of the sodium/potassium-transporting ATPase which is composed of a catalytic alpha subunit, a non-catalytic beta subunit and an additional regulatory subunit. The regulatory subunit, a member of the FXYD protein family, modulates the enzymatic activity in a tissue- and isoform-specific way by changing affinities of the Na+/K+-ATPase toward Na(+), K(+) or ATP. Post-translationally, O-glycosylated; required for stabilization and translocation to the plasma membrane. Expressed specifically in brain. Expressed in both neurons and glia.

The protein resides in the cell membrane. Functionally, associates with and regulates the activity of the sodium/potassium-transporting ATPase (NKA) which catalyzes the hydrolysis of ATP coupled with the exchange of Na(+) and K(+) ions across the plasma membrane. Reduces the apparent affinity for external K(+), an effect that depends on the presence of external Na(+) and voltage. Increases the apparent affinity for intracellular Na(+). The polypeptide is FXYD domain-containing ion transport regulator 7 (Fxyd7) (Rattus norvegicus (Rat)).